The following is a 462-amino-acid chain: UDP-N-acetylmuramate--L-alanine ligase (462 aa).

119–125 (GTHGKTT) provides a ligand contact to ATP.

It belongs to the MurCDEF family.

Its subcellular location is the cytoplasm. The catalysed reaction is UDP-N-acetyl-alpha-D-muramate + L-alanine + ATP = UDP-N-acetyl-alpha-D-muramoyl-L-alanine + ADP + phosphate + H(+). Its pathway is cell wall biogenesis; peptidoglycan biosynthesis. Cell wall formation. The polypeptide is UDP-N-acetylmuramate--L-alanine ligase (Parabacteroides distasonis (strain ATCC 8503 / DSM 20701 / CIP 104284 / JCM 5825 / NCTC 11152)).